A 21-amino-acid polypeptide reads, in one-letter code: Peptide PGLa-R5 (21 aa).

Leucine 21 is subject to Leucine amide.

As to expression, expressed by the skin glands.

The protein resides in the secreted. Functionally, antimicrobial peptide. The sequence is that of Peptide PGLa-R5 from Xenopus ruwenzoriensis (Uganda clawed frog).